The following is a 175-amino-acid chain: ATP synthase subunit b (175 aa).

The helical transmembrane segment at 24–44 (LVLWQIAATVILIIVVRIFLW) threads the bilayer.

This sequence belongs to the ATPase B chain family. F-type ATPases have 2 components, F(1) - the catalytic core - and F(0) - the membrane proton channel. F(1) has five subunits: alpha(3), beta(3), gamma(1), delta(1), epsilon(1). F(0) has three main subunits: a(1), b(2) and c(10-14). The alpha and beta chains form an alternating ring which encloses part of the gamma chain. F(1) is attached to F(0) by a central stalk formed by the gamma and epsilon chains, while a peripheral stalk is formed by the delta and b chains.

The protein resides in the cell membrane. Functionally, f(1)F(0) ATP synthase produces ATP from ADP in the presence of a proton or sodium gradient. F-type ATPases consist of two structural domains, F(1) containing the extramembraneous catalytic core and F(0) containing the membrane proton channel, linked together by a central stalk and a peripheral stalk. During catalysis, ATP synthesis in the catalytic domain of F(1) is coupled via a rotary mechanism of the central stalk subunits to proton translocation. Component of the F(0) channel, it forms part of the peripheral stalk, linking F(1) to F(0). The polypeptide is ATP synthase subunit b (Acholeplasma laidlawii (strain PG-8A)).